A 542-amino-acid chain; its full sequence is Aspartate kinase FUB3 (542 aa).

2 ACT domains span residues I404–D472 and L478–I542.

The protein belongs to the aspartokinase family.

It carries out the reaction L-aspartate + ATP = 4-phospho-L-aspartate + ADP. The protein operates within mycotoxin biosynthesis. In terms of biological role, aspartate kinase; part of the gene cluster that mediates the biosynthesis of fusaric acid, a mycotoxin with low to moderate toxicity to animals and humans, but with high phytotoxic properties. L-aspartate is suggested as fusaric acid amino acid precursor that is activated and further processed to O-acetyl-L-homoserine by cluster enzymes aspartate kinase FUB3 and homoserine O-acetyltransferase FUB5, as well as enzymes of the primary metabolism. The polyketide synthase (PKS) FUB1 generates the triketide trans-2-hexenal which is presumptively released by the hydrolase FUB4 and linked to the NRPS-bound amino acid precursor by NAD(P)-dependent dehydrogenase FUB6. FUB1, FUB4, and the non-canonical NRPS Fub8 may form an enzyme complex. Further processing of the NRPS-bound intermediate might be carried out by FUB6 and the sulfhydrylase FUB7, enabling a spontaneous electrocyclization to close the carbon backbone of fusaric acid. Dihydrofusaric acid is likely to be released via reduction by the thioester reductase (TR) domain of FUB8 whereupon the final oxidation to fusaric acid may (also) be performed by the FMN-dependent dehydrogenase FUB9. This chain is Aspartate kinase FUB3, found in Fusarium oxysporum f. sp. lycopersici (strain 4287 / CBS 123668 / FGSC 9935 / NRRL 34936) (Fusarium vascular wilt of tomato).